A 491-amino-acid polypeptide reads, in one-letter code: Xaa-Pro aminopeptidase 1 (491 aa).

Residues 1–32 (MAEELTPENPAIPETPEETEEPIKQRKNGLYP) form a disordered region. 5 residues coordinate Mn(2+): aspartate 308, aspartate 320, histidine 403, glutamate 434, and glutamate 458.

This sequence belongs to the peptidase M24B family. Homodimer. Mn(2+) is required as a cofactor.

It carries out the reaction Release of any N-terminal amino acid, including proline, that is linked to proline, even from a dipeptide or tripeptide.. This is Xaa-Pro aminopeptidase 1 (pepPI) from Streptomyces coelicolor (strain ATCC BAA-471 / A3(2) / M145).